Consider the following 107-residue polypeptide: Nucleoid-associated protein Lferr_1592 (107 aa).

Belongs to the YbaB/EbfC family. In terms of assembly, homodimer.

It is found in the cytoplasm. It localises to the nucleoid. Binds to DNA and alters its conformation. May be involved in regulation of gene expression, nucleoid organization and DNA protection. In Acidithiobacillus ferrooxidans (strain ATCC 53993 / BNL-5-31) (Leptospirillum ferrooxidans (ATCC 53993)), this protein is Nucleoid-associated protein Lferr_1592.